Here is a 94-residue protein sequence, read N- to C-terminus: Small ribosomal subunit protein uS19 (94 aa).

The protein belongs to the universal ribosomal protein uS19 family.

Functionally, protein S19 forms a complex with S13 that binds strongly to the 16S ribosomal RNA. The chain is Small ribosomal subunit protein uS19 from Halothermothrix orenii (strain H 168 / OCM 544 / DSM 9562).